Consider the following 218-residue polypeptide: Grancalcin (218 aa).

EF-hand domains follow at residues 49 to 84, 85 to 119, 120 to 155, and 156 to 191; these read SSAGDSVYTYFSAVAGQDGEVDAEELQRCLTQSGIS, GTYSPFSLETCRIMIAMLDRDYTGKMGFNAFKELW, SALNAWKENFMTVDQDGSGTVEHHELRQAIGLMGYR, and LSPQTLTTIVKRYSKNGRIFFDDYVACCVKLRALTD. Residues D103, D105, T107, K109, D133, D135, S137, T139, and E144 each contribute to the Ca(2+) site.

As to quaternary structure, homodimer. Interacts with SRI and LCP1.

It localises to the cytoplasm. The protein localises to the cytoplasmic granule membrane. Calcium-binding protein that may play a role in the adhesion of neutrophils to fibronectin. May play a role in the formation of focal adhesions. The chain is Grancalcin (GCA) from Pongo abelii (Sumatran orangutan).